Consider the following 633-residue polypeptide: Dynein axonemal assembly factor 1 (633 aa).

The segment at 1 to 80 is disordered; the sequence is MHPEASEPPV…SRDDRDDRGP (80 aa). A compositionally biased stretch (basic and acidic residues) spans 22-42; it reads AGDHGDAGPGVRKEEINETKE. Positions 46–60 are enriched in low complexity; that stretch reads GPCTTSCQSQQQPSG. Basic and acidic residues predominate over residues 70 to 80; the sequence is HSRDDRDDRGP. LRR repeat units follow at residues 101–123, 124–145, 146–167, 168–189, 190–211, and 215–236; these read ALND…EEYT, GLRC…QAQS, ELRC…EPLQ, KLDA…SCLP, VLNT…EHLR, and QLCV…SVLE. One can recognise an LRRCT domain in the interval 249–288; sequence NPVTKHIPNYRRTVTVRLKHLTYLDDRPVFPKDRACAEAW. The span at 326–344 shows a compositional bias: basic and acidic residues; it reads EERKKARDRGETPLPESEK. Disordered stretches follow at residues 326 to 364 and 404 to 436; these read EERK…TQQK and LSGN…RTED. Serine 349 is modified (phosphoserine). Residues 352 to 364 show a composition bias toward basic and acidic residues; it reads AQEKPPKGETQQK. A compositionally biased stretch (low complexity) spans 413-427; the sequence is TPVVVTPEEVTSPVE. A Phosphothreonine modification is found at threonine 462. Residues serine 465 and serine 488 each carry the phosphoserine modification. 2 stretches are compositionally biased toward polar residues: residues 538–555 and 568–592; these read TTDL…SSHP and GESN…SEGG. The tract at residues 538 to 633 is disordered; that stretch reads TTDLETQSQD…GLEDIEFGLD (96 aa).

It belongs to the DNAAF1 family.

It is found in the cell projection. Its subcellular location is the cilium. Its function is as follows. Cilium-specific protein required for the stability of the ciliary architecture. Plays a role in cytoplasmic preassembly of dynein arms. Involved in regulation of microtubule-based cilia and actin-based brush border microvilli. This is Dynein axonemal assembly factor 1 (Dnaaf1) from Rattus norvegicus (Rat).